Reading from the N-terminus, the 421-residue chain is UPF0229 protein lpp2857 (421 aa).

Residues 83–110 (IAGDRIKRPSGGGAGGAGGNASDSGEGE) form a disordered region. Residues 92–101 (SGGGAGGAGG) are compositionally biased toward gly residues.

This sequence belongs to the UPF0229 family.

In Legionella pneumophila (strain Paris), this protein is UPF0229 protein lpp2857.